The primary structure comprises 438 residues: MNLKVKTISNIGGEVKAPPSKSYSHRAVILASLADGTSKIHDMLFSQDVLSSINVCRALGANITKKDDYLEVIGTNGKLHNSSEVPIDLGNSGTTLRLMTSIASLADNEVILTGDDSLQTRPMEILTESLASLGVCAASINGNGKAPILIKPGYVGGETNILGNVSSQFISSILISAPLSENGVDLFVLPEFKSRPYVNMTCDIMAKFGVKIENEFFVRHDDCDRESKNCRIDEFKISKQEYKSCDYVVEGDYSSASYLLAAVAIYGGNAKILNLFKDSKQGDKLILNILKKMGAKIEIFDDYVEISSEGNLKGIDVDLSNAPDLLITVAILAALADGTTNITGVKHARVKETDRIATTCSELKKLGCKLKEFEDGMSIEGGIRSGVVDSHKDHRLAMAFSLVGLKHDIEIKNGEVFDVSFPNFIEAMSEIGVELELI.

3-phosphoshikimate-binding residues include Lys-21, Ser-22, and Arg-26. Lys-21 contributes to the phosphoenolpyruvate binding site. Positions 93 and 121 each coordinate phosphoenolpyruvate. Residues Ser-166, Ser-167, Gln-168, Ser-194, Asp-324, and Lys-351 each coordinate 3-phosphoshikimate. Gln-168 contributes to the phosphoenolpyruvate binding site. The active-site Proton acceptor is the Asp-324. Phosphoenolpyruvate contacts are provided by Arg-355 and Arg-395.

The protein belongs to the EPSP synthase family. As to quaternary structure, monomer.

It localises to the cytoplasm. The enzyme catalyses 3-phosphoshikimate + phosphoenolpyruvate = 5-O-(1-carboxyvinyl)-3-phosphoshikimate + phosphate. Its pathway is metabolic intermediate biosynthesis; chorismate biosynthesis. Its function is as follows. Catalyzes the transfer of the enolpyruvyl moiety of phosphoenolpyruvate (PEP) to the 5-hydroxyl of shikimate-3-phosphate (S3P) to produce enolpyruvyl shikimate-3-phosphate and inorganic phosphate. The protein is 3-phosphoshikimate 1-carboxyvinyltransferase of Methanobrevibacter smithii (strain ATCC 35061 / DSM 861 / OCM 144 / PS).